The sequence spans 285 residues: N(G),N(G)-dimethylarginine dimethylaminohydrolase 1 (285 aa).

Ala2 carries the N-acetylalanine modification. Substrate contacts are provided by residues Leu30, Asp73, 78 to 79, Arg98, and Arg145; that span reads ED. His173 acts as the Proton donor in catalysis. At Cys222 the chain carries S-nitrosocysteine. Val268 contributes to the substrate binding site. Residue Cys274 is modified to S-nitrosocysteine. The active-site Nucleophile is the Cys274. Position 274 (Cys274) interacts with Zn(2+).

The protein belongs to the DDAH family. Monomer. Detected in brain, liver, kidney and pancreas, and at low levels in skeletal muscle.

It catalyses the reaction N(omega),N(omega)-dimethyl-L-arginine + H2O = dimethylamine + L-citrulline. The enzyme catalyses N(omega)-methyl-L-arginine + H2O = L-citrulline + methylamine. Inhibited by zinc ions. Enzyme purified in the absence of 1,10-phenanthroline contains on average 0.4 zinc atoms per subunit. Inhibited by 4-hydroxy-nonenal through the formation of a covalent adduct with His-173. Competitively inhibited by N(5)-iminopropyl-ornithine. Functionally, hydrolyzes N(G),N(G)-dimethyl-L-arginine (ADMA) and N(G)-monomethyl-L-arginine (MMA) which act as inhibitors of NOS. Has therefore a role in the regulation of nitric oxide generation. The polypeptide is N(G),N(G)-dimethylarginine dimethylaminohydrolase 1 (Homo sapiens (Human)).